Consider the following 255-residue polypeptide: Proliferating cell nuclear antigen 2 (255 aa).

A DNA-binding region spans residues 61-80; it reads HCDRNVSLGLDLKSLGKVLK.

The protein belongs to the PCNA family. Homotrimer. Interacts with the catalytic subunits of two DNA polymerase complexes: PolD1 in the delta complex and PolE1/DNApol-epsilon255 in the epsilon complex.

The protein resides in the nucleus. Its subcellular location is the chromosome. The protein localises to the cytoplasm. Its function is as follows. Likely to be an auxiliary protein of DNA polymerase delta complex and is probably involved in the control of DNA replication and repair by increasing the polymerase's processibility. May function independently of PCNA during DNA repair. The protein is Proliferating cell nuclear antigen 2 of Drosophila melanogaster (Fruit fly).